The primary structure comprises 752 residues: MSDMAERLALHEFTENAYLNYSMYVIMDRALPFIGDGLKPVQRRIVYAMSELGLNATAKFKKSARTVGDVLGKYHPHGDSACYEAMVLMAQPFSYRYPLVDGQGNWGAPDDPKSFAAMRYTESRLSKYAELLLSELGQGTADWVPNFDGTMQEPKMLPARLPNILLNGTTGIAVGMATDIPPHNLREVAKAAITLIEQPKTTLDQLLDIVQGPDYPTEAEIITPRAEIRKIYENGRGSVRMRAVWTKEDGAVVISALPHQVSGAKVLEQIAAQMRNKKLPMVDDLRDESDHENPTRLVIVPRSNRVDMEQVMNHLFATTDLEKSYRINLNMIGLDGRPAVKNLLEILTEWLAFRRDTVRRRLNYRLEKVLKRLHILEGLLVAFLNIDEVIEIIRSEDEPKPALMSRFGISETQAEAILELKLRHLAKLEEMKIRGEQDELEKERDQLQGILASERKMNTLLKKELQADADAYGDDRRSPLREREEAKAMSEHDMLPSEPVTIVLSQMGWVRSAKGHDIDAPGLNYKAGDSFKAAVKGKSNQPVVFIDTTGRSYAIDPITLPSARGQGEPLTGKLTLPPGATVEHMLMEGDDQKLLMASDAGYGFVCTFNDLVARNRAGKTLITLPENAHVMPPLVIEDEHDMLLAITQAGRMLMFPVDSLPQLSKGKGNKIINIPSAEAAKGDDGLAHLYVLPPQSTLTIHVGKRKIKLRPEELQKVVGERGRRGTLMRGLQRIDRIEIDSPHRVSHGDSEE.

One can recognise a Topo IIA-type catalytic domain in the interval 31 to 494 (LPFIGDGLKP…EAKAMSEHDM (464 aa)). Tyr-120 serves as the catalytic O-(5'-phospho-DNA)-tyrosine intermediate. The segment at 472–492 (YGDDRRSPLREREEAKAMSEH) is disordered. The span at 473–492 (GDDRRSPLREREEAKAMSEH) shows a compositional bias: basic and acidic residues.

Belongs to the type II topoisomerase GyrA/ParC subunit family. ParC type 1 subfamily. In terms of assembly, heterotetramer composed of ParC and ParE.

The protein resides in the cell membrane. It catalyses the reaction ATP-dependent breakage, passage and rejoining of double-stranded DNA.. Its function is as follows. Topoisomerase IV is essential for chromosome segregation. It relaxes supercoiled DNA. Performs the decatenation events required during the replication of a circular DNA molecule. The sequence is that of DNA topoisomerase 4 subunit A from Salmonella typhimurium (strain LT2 / SGSC1412 / ATCC 700720).